The sequence spans 350 residues: Protein-glutamate methylesterase/protein-glutamine glutaminase 1 (350 aa).

Residues 1 to 116 (MVVDDSAVVR…KGFLHDSAKV (116 aa)) form the Response regulatory domain. Asp50 bears the 4-aspartylphosphate mark. One can recognise a CheB-type methylesterase domain in the interval 160–350 (LKTTEQLVAI…IPQAILDCSH (191 aa)). Active-site residues include Ser172, His198, and Asp294.

The protein belongs to the CheB family. Post-translationally, phosphorylated by CheA. Phosphorylation of the N-terminal regulatory domain activates the methylesterase activity.

The protein localises to the cytoplasm. It catalyses the reaction [protein]-L-glutamate 5-O-methyl ester + H2O = L-glutamyl-[protein] + methanol + H(+). It carries out the reaction L-glutaminyl-[protein] + H2O = L-glutamyl-[protein] + NH4(+). Its function is as follows. Involved in chemotaxis. Part of a chemotaxis signal transduction system that modulates chemotaxis in response to various stimuli. Catalyzes the demethylation of specific methylglutamate residues introduced into the chemoreceptors (methyl-accepting chemotaxis proteins or MCP) by CheR. Also mediates the irreversible deamidation of specific glutamine residues to glutamic acid. The sequence is that of Protein-glutamate methylesterase/protein-glutamine glutaminase 1 from Photobacterium profundum (strain SS9).